Here is a 251-residue protein sequence, read N- to C-terminus: 1-(5-phosphoribosyl)-5-[(5-phosphoribosylamino)methylideneamino] imidazole-4-carboxamide isomerase (251 aa).

The active-site Proton acceptor is the Asp8. Asp131 (proton donor) is an active-site residue.

Belongs to the HisA/HisF family.

Its subcellular location is the cytoplasm. The enzyme catalyses 1-(5-phospho-beta-D-ribosyl)-5-[(5-phospho-beta-D-ribosylamino)methylideneamino]imidazole-4-carboxamide = 5-[(5-phospho-1-deoxy-D-ribulos-1-ylimino)methylamino]-1-(5-phospho-beta-D-ribosyl)imidazole-4-carboxamide. The protein operates within amino-acid biosynthesis; L-histidine biosynthesis; L-histidine from 5-phospho-alpha-D-ribose 1-diphosphate: step 4/9. This is 1-(5-phosphoribosyl)-5-[(5-phosphoribosylamino)methylideneamino] imidazole-4-carboxamide isomerase from Burkholderia ambifaria (strain MC40-6).